Reading from the N-terminus, the 123-residue chain is uncharacterized protein (123 aa).

The first 19 residues, 1-19, serve as a signal peptide directing secretion; the sequence is MKIKYFFIPLFSSAILFSA. A lipid anchor (N-palmitoyl cysteine) is attached at Cys20. The S-diacylglycerol cysteine moiety is linked to residue Cys20.

Belongs to the MG439/MG440 family.

It localises to the cell membrane. This is an uncharacterized protein from Mycoplasma pneumoniae (strain ATCC 29342 / M129 / Subtype 1) (Mycoplasmoides pneumoniae).